We begin with the raw amino-acid sequence, 382 residues long: Dual-specificity RNA methyltransferase RlmN (382 aa).

The active-site Proton acceptor is Glu-113. In terms of domain architecture, Radical SAM core spans 119 to 358; the sequence is EINRATLCIS…TTIRKQRGID (240 aa). A disulfide bridge links Cys-126 with Cys-363. Residues Cys-133, Cys-137, and Cys-140 each contribute to the [4Fe-4S] cluster site. S-adenosyl-L-methionine-binding positions include 187–188, Ser-219, 241–243, and Asn-320; these read GE and SLH. The active-site S-methylcysteine intermediate is the Cys-363.

This sequence belongs to the radical SAM superfamily. RlmN family. [4Fe-4S] cluster is required as a cofactor.

It localises to the cytoplasm. The enzyme catalyses adenosine(2503) in 23S rRNA + 2 reduced [2Fe-2S]-[ferredoxin] + 2 S-adenosyl-L-methionine = 2-methyladenosine(2503) in 23S rRNA + 5'-deoxyadenosine + L-methionine + 2 oxidized [2Fe-2S]-[ferredoxin] + S-adenosyl-L-homocysteine. The catalysed reaction is adenosine(37) in tRNA + 2 reduced [2Fe-2S]-[ferredoxin] + 2 S-adenosyl-L-methionine = 2-methyladenosine(37) in tRNA + 5'-deoxyadenosine + L-methionine + 2 oxidized [2Fe-2S]-[ferredoxin] + S-adenosyl-L-homocysteine. Specifically methylates position 2 of adenine 2503 in 23S rRNA and position 2 of adenine 37 in tRNAs. m2A2503 modification seems to play a crucial role in the proofreading step occurring at the peptidyl transferase center and thus would serve to optimize ribosomal fidelity. The polypeptide is Dual-specificity RNA methyltransferase RlmN (Wigglesworthia glossinidia brevipalpis).